A 198-amino-acid chain; its full sequence is ATP synthase protein MI25 (198 aa).

A helical transmembrane segment spans residues Ile29–Ser49.

Belongs to the ATPase protein MI25 family. In terms of assembly, F-type ATPases have 2 components, CF(1) - the catalytic core - and CF(0) - the membrane proton channel. CF(1) has five subunits: alpha(3), beta(3), gamma(1), delta(1), epsilon(1). CF(0) has three main subunits: a, b and c.

Its subcellular location is the mitochondrion membrane. Its function is as follows. This is one of the chains of the nonenzymatic component (CF(0) subunit) of the mitochondrial ATPase complex. In Nicotiana tabacum (Common tobacco), this protein is ATP synthase protein MI25.